A 382-amino-acid polypeptide reads, in one-letter code: Mannitol-1-phosphate 5-dehydrogenase (382 aa).

3-14 contributes to the NAD(+) binding site; it reads ALHFGAGNIGRG. K269 carries the N6-acetyllysine modification.

The protein belongs to the mannitol dehydrogenase family.

The enzyme catalyses D-mannitol 1-phosphate + NAD(+) = beta-D-fructose 6-phosphate + NADH + H(+). The protein is Mannitol-1-phosphate 5-dehydrogenase of Escherichia coli O7:K1 (strain IAI39 / ExPEC).